A 41-amino-acid chain; its full sequence is Plantazolicin (41 aa).

A propeptide spanning residues 1–27 is cleaved from the precursor; that stretch reads MTQIKVPTALIASVHGEGQHLFEPMAA. Arg-28 is subject to N2,N2-dimethylarginine. Residues 28–29 constitute a cross-link (thiazole-4-carboxylic acid (Arg-Cys)); that stretch reads RC. 2 cross-links (5-methyloxazole-4-carboxylic acid (Cys-Thr)) span residues 29–30 and 31–32; these read CT. A cross-link (thiazole-4-carboxylic acid (Thr-Cys)) is located at residues 30-31; sequence TC. The 5-methyloxazole-4-carboxylic acid (Thr-Thr) cross-link spans 32-33; it reads TT. The oxazole-4-carboxylic acid (Ile-Ser) cross-link spans 35 to 36; it reads IS. 3 consecutive cross-links (oxazole-4-carboxylic acid (Ser-Ser)) follow at residues 36–37, 37–38, and 38–39; these read SS. Positions 39–40 form a cross-link, 5-methyloxazoline-4-carboxylic acid (Ser-Thr); it reads ST.

Post-translationally, maturation of thiazole and oxazole containing antibiotics involves the enzymatic condensation of a Cys, Ser or Thr with the alpha-carbonyl of the preceding amino acid to form a thioether or ether bond, then dehydration to form a double bond with the alpha-amino nitrogen. Thiazoline or oxazoline ring are dehydrogenated to form thiazole or oxazole rings. In terms of processing, 2 forms exist: plantazolicin A and plantazolicin B. The structural difference between them is a dimethylation at Arg-28 in plantazolicin A.

It localises to the secreted. The protein resides in the cell wall. Its function is as follows. Peptide antibiotic inhibiting growth of Gram-positive bacteria in the dimethylated form plantazolicin A. The desmethyl form plantazolicin B has no antibiotic activity. The mode of action appears to be disruption of cell walls and lysis of cells. Inhibits B.subtilis strain HB0042, B.megaterium strain 7A1 and B.anthracis (MIC=2-4 ug/ml). Weakly inhibits Gram-positive bacteria B.brevis strain ATCC 8246, B.subtilis strain 168, B.cereus strain ATCC 14579 and strain CU1065, B.licheniformis strain ATCC 9789, M.luteus, B.sphaericus, P.granivorans and S.pyogenes (MIC=128 ug/ml). Does not inhibit B.pumilus, P.polymyxa, Arthrobacter sp., S.aureus, vancomycin-resistant E.faecalis, L.monocytogenes, methicillin-resistant S.aureus or Gram-negative bacteria E.coli strain K12, K.terrigena, Pseudomonas sp. and E.carotovora. This chain is Plantazolicin, found in Bacillus velezensis (strain DSM 23117 / BGSC 10A6 / LMG 26770 / FZB42) (Bacillus amyloliquefaciens subsp. plantarum).